A 137-amino-acid chain; its full sequence is Nucleoside diphosphate kinase (137 aa).

Lys-9, Phe-57, Arg-85, Thr-91, Arg-102, and Asn-112 together coordinate ATP. Residue His-115 is the Pros-phosphohistidine intermediate of the active site.

It belongs to the NDK family. As to quaternary structure, homotetramer. It depends on Mg(2+) as a cofactor.

It localises to the cytoplasm. It carries out the reaction a 2'-deoxyribonucleoside 5'-diphosphate + ATP = a 2'-deoxyribonucleoside 5'-triphosphate + ADP. The enzyme catalyses a ribonucleoside 5'-diphosphate + ATP = a ribonucleoside 5'-triphosphate + ADP. Major role in the synthesis of nucleoside triphosphates other than ATP. The ATP gamma phosphate is transferred to the NDP beta phosphate via a ping-pong mechanism, using a phosphorylated active-site intermediate. The chain is Nucleoside diphosphate kinase from Pelobacter propionicus (strain DSM 2379 / NBRC 103807 / OttBd1).